Reading from the N-terminus, the 814-residue chain is Protein fam-161 (814 aa).

The span at 71 to 87 (ITQHRSSYKVTKSSSCH) shows a compositional bias: polar residues. Disordered stretches follow at residues 71-130 (ITQH…SWSQ), 150-255 (RHQV…ATSA), 569-610 (SRSK…THAT), and 714-814 (MKSA…SSEA). The segment covering 99–111 (MPRHLDLKPRSSE) has biased composition (basic and acidic residues). Positions 174 to 193 (STAPSQVSVTSSVQSVAALS) are enriched in low complexity. 2 stretches are compositionally biased toward polar residues: residues 194-207 (GQNP…TPSH) and 216-235 (RTHQ…TLQN). The span at 236 to 249 (PRHRTSSASRHHST) shows a compositional bias: basic residues. Polar residues-rich tracts occupy residues 570–583 (RSKS…NCQE) and 594–610 (ENLP…THAT). A coiled-coil region spans residues 606-689 (STHATQLREE…LAEMKQRVLN (84 aa)). Positions 714–727 (MKSAKGRGIERVQS) are enriched in basic and acidic residues. A compositionally biased stretch (polar residues) spans 728-745 (QEKQQSIGRRSSEVSGSG). Over residues 751 to 765 (KGYEESFESEDKSEK) the composition is skewed to basic and acidic residues. 2 stretches are compositionally biased toward low complexity: residues 766–779 (SGSS…SGSE) and 795–814 (SKST…SSEA).

This sequence belongs to the FAM161 family. As to expression, expressed in amphid and phasmid ciliated neurons.

The protein resides in the cell projection. It is found in the cilium. The protein localises to the cytoplasm. Its subcellular location is the cytoskeleton. It localises to the cilium axoneme. This chain is Protein fam-161, found in Caenorhabditis elegans.